Consider the following 233-residue polypeptide: Uracil-DNA glycosylase (233 aa).

Residue aspartate 70 is the Proton acceptor of the active site.

It belongs to the uracil-DNA glycosylase (UDG) superfamily. UNG family.

Its subcellular location is the cytoplasm. The catalysed reaction is Hydrolyzes single-stranded DNA or mismatched double-stranded DNA and polynucleotides, releasing free uracil.. In terms of biological role, excises uracil residues from the DNA which can arise as a result of misincorporation of dUMP residues by DNA polymerase or due to deamination of cytosine. This Helicobacter acinonychis (strain Sheeba) protein is Uracil-DNA glycosylase.